Here is a 240-residue protein sequence, read N- to C-terminus: MIDQGRISVLSEEGDYLLVDKPLDWTSFDVVAKIRGAYKRNGAKRKVGHCGTLDPKATGLLILATGRKTKTISSLELLDKAYEGTIRLGAKTVSHDTESEEYDLRDVPSLDERAIREAATSMIGERMQQPPMHSAVWHNGKRLYELARQGHEVKERKARQIEIHQFEITGIELPYVHFYIRVSKGAYIRVIAHELGELLGVGGYLKSLKRVAIGQYQLSDAMSVDAVVDEITRAASVIEE.

Asp-54 serves as the catalytic Nucleophile.

Belongs to the pseudouridine synthase TruB family. Type 1 subfamily.

It carries out the reaction uridine(55) in tRNA = pseudouridine(55) in tRNA. Responsible for synthesis of pseudouridine from uracil-55 in the psi GC loop of transfer RNAs. This chain is tRNA pseudouridine synthase B, found in Chlorobaculum tepidum (strain ATCC 49652 / DSM 12025 / NBRC 103806 / TLS) (Chlorobium tepidum).